The following is a 177-amino-acid chain: Bifunctional protein PyrR (177 aa).

The PRPP-binding motif lies at 99–111 (VVLVDDVLFTGRT).

This sequence belongs to the purine/pyrimidine phosphoribosyltransferase family. PyrR subfamily.

The catalysed reaction is UMP + diphosphate = 5-phospho-alpha-D-ribose 1-diphosphate + uracil. Functionally, regulates the transcription of the pyrimidine nucleotide (pyr) operon in response to exogenous pyrimidines. In terms of biological role, also displays a weak uracil phosphoribosyltransferase activity which is not physiologically significant. This Geobacter sp. (strain M21) protein is Bifunctional protein PyrR.